Reading from the N-terminus, the 362-residue chain is H-2 class I histocompatibility antigen, D-K alpha chain (362 aa).

The signal sequence occupies residues 1 to 24; the sequence is MGAMVPRTLLLLLAAALAPAQTRA. The tract at residues 25–114 is alpha-1; the sequence is GPHSLRYFET…LLRYYNQSEG (90 aa). The Extracellular portion of the chain corresponds to 25-306; the sequence is GPHSLRYFET…RWEPPPSTDS (282 aa). N-linked (GlcNAc...) asparagine glycosylation is present at asparagine 110. The segment at 115-206 is alpha-2; that stretch reads GSHTIQRLSG…ELGNATLLHT (92 aa). Cysteine 125 and cysteine 188 are disulfide-bonded. N-linked (GlcNAc...) asparagine glycans are attached at residues asparagine 200 and asparagine 280. Residues 207–298 form an alpha-3 region; it reads DSPKAHVTHH…GLPEPLTLRW (92 aa). In terms of domain architecture, Ig-like C1-type spans 209-297; sequence PKAHVTHHPR…EGLPEPLTLR (89 aa). Residues cysteine 227 and cysteine 283 are joined by a disulfide bond. The segment at 299-306 is connecting peptide; the sequence is EPPPSTDS. A helical transmembrane segment spans residues 307 to 333; sequence YMVIVAVLGVLGAVAIIGAVVAFVMMM. At 334–362 the chain is on the cytoplasmic side; sequence RRNTGGKGGDYTLTPGSQSSEMSLPDCKA. The disordered stretch occupies residues 340 to 362; the sequence is KGGDYTLTPGSQSSEMSLPDCKA. Phosphoserine occurs at positions 353 and 356.

Belongs to the MHC class I family. As to quaternary structure, heterodimer of an alpha chain and a beta chain (beta-2-microglobulin). In terms of processing, polyubiquitinated in case of infection by murid herpesvirus 4, by the viral E3 ligase K3 (mK3), leading to target the protein for rapid degradation by the endoplasmic reticulum-associated degradation (ERAD) system. Ubiquitination takes place on lysine, as well as serine and threonine residues present in the cytoplasmic tail. Hydroxylated serine and threonine residues in the cytoplasmic tail are subject to ubiquitination via ester bonds instead of the classical isopeptide linkage. Hydroxylation of residues in the cytoplasmic tail.

It is found in the membrane. Involved in the presentation of foreign antigens to the immune system. The sequence is that of H-2 class I histocompatibility antigen, D-K alpha chain (H2-D1) from Mus musculus (Mouse).